Here is a 96-residue protein sequence, read N- to C-terminus: Large ribosomal subunit protein bL25 (96 aa).

It belongs to the bacterial ribosomal protein bL25 family. In terms of assembly, part of the 50S ribosomal subunit; part of the 5S rRNA/L5/L18/L25 subcomplex. Contacts the 5S rRNA. Binds to the 5S rRNA independently of L5 and L18.

Functionally, this is one of the proteins that binds to the 5S RNA in the ribosome where it forms part of the central protuberance. The sequence is that of Large ribosomal subunit protein bL25 from Francisella tularensis subsp. holarctica (strain FTNF002-00 / FTA).